The following is a 555-amino-acid chain: mRNA cleavage and polyadenylation factor CLP1 (555 aa).

Residues Glu-30, Lys-69, and 156–161 (YLGKTS) each bind ATP. Positions 431–451 (DDFEHITNEDENGGDGNDGDG) are disordered.

The protein belongs to the Clp1 family. Clp1 subfamily. Component of a pre-mRNA cleavage factor complex. Interacts directly with PCF11.

It is found in the nucleus. In terms of biological role, required for endonucleolytic cleavage during polyadenylation-dependent pre-mRNA 3'-end formation. The sequence is that of mRNA cleavage and polyadenylation factor CLP1 from Lodderomyces elongisporus (strain ATCC 11503 / CBS 2605 / JCM 1781 / NBRC 1676 / NRRL YB-4239) (Yeast).